Reading from the N-terminus, the 149-residue chain is MICLLPLIAVMLFVFATHTVLALEIATGIDAPETEFSASTQTTRVSFRRITSVDNKRFLRQETTFEEKPSVNDVHAEERSSFYRKFLYRLFGDRMDVEAKVLARDSNWLINIFRRKFLRWAGREEHPHKATTFDTTCCQVAPYDPVTSS.

The N-terminal stretch at 1–22 (MICLLPLIAVMLFVFATHTVLA) is a signal peptide. The short motif at 57–79 (RFLRQETTFEEKPSVNDVHAEER) is the RxLR-dEER element.

Belongs to the RxLR effector family.

The protein localises to the secreted. It is found in the host membrane. Functionally, secreted effector that completely suppresses the host cell death induced by cell death-inducing proteins. The chain is Secreted RxLR effector protein 47 from Plasmopara viticola (Downy mildew of grapevine).